The sequence spans 238 residues: Ribonuclease PH (238 aa).

Phosphate contacts are provided by residues Arg86 and 124-126; that span reads GTR.

This sequence belongs to the RNase PH family. Homohexameric ring arranged as a trimer of dimers.

The enzyme catalyses tRNA(n+1) + phosphate = tRNA(n) + a ribonucleoside 5'-diphosphate. Phosphorolytic 3'-5' exoribonuclease that plays an important role in tRNA 3'-end maturation. Removes nucleotide residues following the 3'-CCA terminus of tRNAs; can also add nucleotides to the ends of RNA molecules by using nucleoside diphosphates as substrates, but this may not be physiologically important. Probably plays a role in initiation of 16S rRNA degradation (leading to ribosome degradation) during starvation. This is Ribonuclease PH from Shigella dysenteriae serotype 1 (strain Sd197).